The following is a 238-amino-acid chain: ATP synthase subunit a (238 aa).

5 consecutive transmembrane segments (helical) span residues 16–36, 79–99, 103–123, 129–149, and 209–229; these read LIWL…TVLF, GLFM…FFPV, FVFG…SSLL, GLMS…MVVV, and VFGA…CVLL.

Belongs to the ATPase A chain family. As to quaternary structure, F-type ATPases have 2 components, CF(1) - the catalytic core - and CF(0) - the membrane proton channel. CF(1) has five subunits: alpha(3), beta(3), gamma(1), delta(1), epsilon(1). CF(0) has three main subunits: a, b and c.

It localises to the mitochondrion inner membrane. Functionally, mitochondrial membrane ATP synthase (F(1)F(0) ATP synthase or Complex V) produces ATP from ADP in the presence of a proton gradient across the membrane which is generated by electron transport complexes of the respiratory chain. F-type ATPases consist of two structural domains, F(1) - containing the extramembraneous catalytic core and F(0) - containing the membrane proton channel, linked together by a central stalk and a peripheral stalk. During catalysis, ATP synthesis in the catalytic domain of F(1) is coupled via a rotary mechanism of the central stalk subunits to proton translocation. Key component of the proton channel; it may play a direct role in the translocation of protons across the membrane. The polypeptide is ATP synthase subunit a (ATP6) (Mytilus edulis (Blue mussel)).